The following is a 945-amino-acid chain: Isoleucine--tRNA ligase 1 (945 aa).

Positions 66–76 (PYANGDIHLGH) match the 'HIGH' region motif. L-isoleucyl-5'-AMP is bound at residue glutamate 581. Positions 622–626 (KMSKS) match the 'KMSKS' region motif. ATP is bound at residue lysine 625. Positions 908, 911, 928, and 931 each coordinate Zn(2+).

It belongs to the class-I aminoacyl-tRNA synthetase family. IleS type 1 subfamily. As to quaternary structure, monomer. It depends on Zn(2+) as a cofactor.

Its subcellular location is the cytoplasm. It carries out the reaction tRNA(Ile) + L-isoleucine + ATP = L-isoleucyl-tRNA(Ile) + AMP + diphosphate. Functionally, catalyzes the attachment of isoleucine to tRNA(Ile). As IleRS can inadvertently accommodate and process structurally similar amino acids such as valine, to avoid such errors it has two additional distinct tRNA(Ile)-dependent editing activities. One activity is designated as 'pretransfer' editing and involves the hydrolysis of activated Val-AMP. The other activity is designated 'posttransfer' editing and involves deacylation of mischarged Val-tRNA(Ile). The sequence is that of Isoleucine--tRNA ligase 1 from Burkholderia pseudomallei (strain K96243).